The primary structure comprises 201 residues: Potassium-transporting ATPase KdpC subunit (201 aa).

The chain crosses the membrane as a helical span at residues 10 to 30 (VVLVVLTVICGLAYPLAMTGI). The segment at 67–105 (HGRPSATSAADPADPTKTVSSPYNAANSSGSNLGPTSKA) is disordered. Low complexity predominate over residues 70-82 (PSATSAADPADPT). The segment covering 83 to 105 (KTVSSPYNAANSSGSNLGPTSKA) has biased composition (polar residues).

It belongs to the KdpC family. As to quaternary structure, the system is composed of three essential subunits: KdpA, KdpB and KdpC.

The protein resides in the cell inner membrane. In terms of biological role, part of the high-affinity ATP-driven potassium transport (or Kdp) system, which catalyzes the hydrolysis of ATP coupled with the electrogenic transport of potassium into the cytoplasm. This subunit acts as a catalytic chaperone that increases the ATP-binding affinity of the ATP-hydrolyzing subunit KdpB by the formation of a transient KdpB/KdpC/ATP ternary complex. In Rhodopseudomonas palustris (strain BisB5), this protein is Potassium-transporting ATPase KdpC subunit.